The following is a 303-amino-acid chain: MTQQRTLKNTIRATGVGLHSGDKVYMTLRPAPVDHGVVFRRVDLEPVVEVPADAELVTETTLCTGLTCNGAKIQTVEHLMSALAGLGVDNVIVELSSAELPIMDGSSGPFVFLLQSAGIVEQSKPKRFIRIKQTVEVRDGDKVARFEPYEGYKLGFTIEFNHPMIPAKQSRQEIEFSTSAYVKEISRARTFGFMRDLEYMRERNLGLGGSMDNAIVLDEFRVLNEDGLRYTNEFVRHKILDAIGDLYLAGGAILGAYEGFKSGHALNNKLVRALLADQAAWEWVSFPEGTEQPPVTYASPVYA.

Zn(2+) contacts are provided by H78, H237, and D241. The active-site Proton donor is the H264.

Belongs to the LpxC family. Zn(2+) is required as a cofactor.

The catalysed reaction is a UDP-3-O-[(3R)-3-hydroxyacyl]-N-acetyl-alpha-D-glucosamine + H2O = a UDP-3-O-[(3R)-3-hydroxyacyl]-alpha-D-glucosamine + acetate. Its pathway is glycolipid biosynthesis; lipid IV(A) biosynthesis; lipid IV(A) from (3R)-3-hydroxytetradecanoyl-[acyl-carrier-protein] and UDP-N-acetyl-alpha-D-glucosamine: step 2/6. Catalyzes the hydrolysis of UDP-3-O-myristoyl-N-acetylglucosamine to form UDP-3-O-myristoylglucosamine and acetate, the committed step in lipid A biosynthesis. The polypeptide is UDP-3-O-acyl-N-acetylglucosamine deacetylase (Xanthomonas euvesicatoria pv. vesicatoria (strain 85-10) (Xanthomonas campestris pv. vesicatoria)).